A 73-amino-acid polypeptide reads, in one-letter code: uncharacterized protein (73 aa).

This is an uncharacterized protein from Autographa californica nuclear polyhedrosis virus (AcMNPV).